The sequence spans 96 residues: MSTKYETMYILRPDLTDEIIDQTITRYQTLLAEQGAAPVETQHRGKRRLAYELKKFKEGIYVQMNYDAPTTAVAELEKAFRLSEEVIRFLTVREED.

The protein belongs to the bacterial ribosomal protein bS6 family.

In terms of biological role, binds together with bS18 to 16S ribosomal RNA. The protein is Small ribosomal subunit protein bS6 of Gloeobacter violaceus (strain ATCC 29082 / PCC 7421).